A 754-amino-acid chain; its full sequence is MSFFGFNTTLPKENMFPNEGQLEEDGIDFEETYDDLGNQLNEAGDELNDETFGVSAGSIGRDFDFSGTTAQASAQLEDEQYQINQQNIFAKPVKPASSELPQVSRLNGASQFPSREPASTAINKLSDLQPMASIWENIVPEKPAIIPPEVASLQDRLGAQPSEKVFSLQELEEQLLNSMTAPKPPSQPAIPIVPSEMAAQVTRENISSLDPAISAASIGNVTFGQPNIPSTTTDFAGLAAPNMVHPSQAIPNPVMQPSLVPQMPYPQNGMYNPSVAPPASLVNLFQQEQLIQNQNLDEKRQKLERDHMLMAQCAGLMTRSDKSFIARIQISQLMSEDPESDDFYYRVYSIIRGRKPSEEEASHFIQTYLGPSNNRRRGRRSENPMQKLQQQLQRLVSSAKERPKATQLSLEGALGKIAVNTVRTPRQLLNVKRPTEPASSNSSLNNFSGFSTKKDVLHAIEKVYDLLLDFEQALRKASTLETTDQEQIDTWKTTLSEKLESIWKALYINESLEASSKTRPPFISIISHPKGMRLLPRLFPHLSKEQQISILKVVVYNFDSLDIVLRGTFDVNGELPLDVVSEMSSFTQFIIPPLLTIVNELDLETINNLFSQLLNRTNAVYLIQTKIGLSFLTLFISRAEILKQSGTVNQNEKEEWENTFNVMFNRVKGHFSTVFPPPNARAYADESYPWEFLAACATAASSEQHFTLVSETRDRVLDNIITSKRAPSEIAVVRISNVNLFLNAMGLDARQLSA.

The tract at residues 499–754 (LESIWKALYI…MGLDARQLSA (256 aa)) is interaction with lsm1.

It belongs to the PAT1 family. In terms of assembly, interacts with dcp2. Interacts with lsm1; via C-terminus.

It localises to the cytoplasm. The protein resides in the nucleus. It is found in the P-body. Functionally, activator of decapping that functions as a general and active mechanism of translational repression and required for P-body formation. Stabilizes the 3' terminus of mRNAs and modulates the rates of mRNA-decapping that occur following deadenylation. Might be required for promoting the formation or the stabilization of the preinitiation translation complexes. Necessary for accurate chromosome transmission during cell division. Together with lsm1, recruits the deadenylase ccr4 to P-bodies. The sequence is that of Deadenylation-dependent mRNA-decapping factor pdc2 from Schizosaccharomyces pombe (strain 972 / ATCC 24843) (Fission yeast).